Here is a 122-residue protein sequence, read N- to C-terminus: Large ribosomal subunit protein uL14 (122 aa).

This sequence belongs to the universal ribosomal protein uL14 family. In terms of assembly, part of the 50S ribosomal subunit. Forms a cluster with proteins L3 and L19. In the 70S ribosome, L14 and L19 interact and together make contacts with the 16S rRNA in bridges B5 and B8.

In terms of biological role, binds to 23S rRNA. Forms part of two intersubunit bridges in the 70S ribosome. The protein is Large ribosomal subunit protein uL14 of Corynebacterium glutamicum (strain R).